The chain runs to 211 residues: Large ribosomal subunit protein uL3 (211 aa).

Gln150 is modified (N5-methylglutamine).

It belongs to the universal ribosomal protein uL3 family. Part of the 50S ribosomal subunit. Forms a cluster with proteins L14 and L19. Methylated by PrmB.

Its function is as follows. One of the primary rRNA binding proteins, it binds directly near the 3'-end of the 23S rRNA, where it nucleates assembly of the 50S subunit. This Pseudomonas putida (strain GB-1) protein is Large ribosomal subunit protein uL3.